Consider the following 553-residue polypeptide: MSSDDTVKQEHSCSADSEKQDSSCASDNEQPKEPQSPRNIHGLLWVVTILAIYSSTFLFALDNTIVANIQPAIISSLNGIEKLAWSGVAFVMASSATVLTWLQIFNQFNIKWMYIFSIAVFMGGSAICGAAQSMDMLIGGRVICGIGGVGQYVGVMNFLPRLTTMQERPMYVSAMGLTWGAGTVLGPIIGGAFTDSSAGWRWSFYINLVVGGLFAPVYIFLLPSLEPQPAGTTVSSRLKRMDLVGTLILFAAFAAGVIGINFAGAMYPWSEPGIIVAITLGGVLFIVFGIQQTYCILTTEETRLFPVELVSWRQPLLSLLFVCGCCTGVCVTVPTYVIPLYFQFTEGDESLQSGVRLLPFVCLLVFSCVSGGYLAGRLGYYIPWYIMGGGFCLIGSALMYTIKPSSGPGATYGYSSLIGLGSGMYLQLGHAVAQAKVKPEKVPAAVAFTTTAQLNGLTFALVLSQCVFVNEAAKRIGWILPHEPRSTIVDAISGTGSTFVQELPTATQNEVLGAIVTAIDRTYILCIVAAAVTLLATLGMKWERLFIEAAAAA.

Residues 1–21 (MSSDDTVKQEHSCSADSEKQD) show a composition bias toward basic and acidic residues. A disordered region spans residues 1–36 (MSSDDTVKQEHSCSADSEKQDSSCASDNEQPKEPQS). 13 helical membrane-spanning segments follow: residues 40–60 (IHGL…FLFA), 85–105 (WSGV…LQIF), 110–130 (IKWM…ICGA), 136–156 (MLIG…VGVM), 174–194 (AMGL…GAFT), 202–222 (WSFY…IFLL), 243–263 (LVGT…INFA), 270–290 (SEPG…VFGI), 319–339 (LLFV…YVIP), 355–375 (VRLL…GYLA), 382–402 (IPWY…MYTI), 413–433 (GYSS…HAVA), and 522–542 (TYIL…GMKW).

The protein belongs to the major facilitator superfamily. TCR/Tet family.

Its subcellular location is the cell membrane. Its function is as follows. Efflux pump; part of the gene cluster that mediates the biosynthesis of asperlin, a polyketide showing anti-inflammatory, antitumor and antibiotic activities. Is probably involved in the efflux of asperlin. This Emericella nidulans (strain FGSC A4 / ATCC 38163 / CBS 112.46 / NRRL 194 / M139) (Aspergillus nidulans) protein is Efflux pump alnA.